We begin with the raw amino-acid sequence, 238 residues long: Probable transcriptional regulatory protein SpyM51586 (238 aa).

This sequence belongs to the TACO1 family. YeeN subfamily.

It is found in the cytoplasm. This Streptococcus pyogenes serotype M5 (strain Manfredo) protein is Probable transcriptional regulatory protein SpyM51586.